The following is a 295-amino-acid chain: Protein PHR1-LIKE 2 (295 aa).

One can recognise an HTH myb-type domain in the interval 38-98; the sequence is TDPKPRLRWT…HLQKFRLGRQ (61 aa). The segment at residues 69-94 is a DNA-binding region (H-T-H motif); sequence PKTIMRTMGVKGLTLYHLKSHLQKFR. The segment at 96-138 is disordered; sequence GRQAGKESTENSKDASCVGESQDTGSSSTSSMRMAQQEQNEGY. A compositionally biased stretch (basic and acidic residues) spans 99–108; the sequence is AGKESTENSK. Over residues 127-138 the composition is skewed to polar residues; that stretch reads MRMAQQEQNEGY. Positions 141–161 form a coiled coil; sequence TEALRAQMEVQRRLHDQLEVQ. The short motif at 154–159 is the LHEQLE element; that stretch reads LHDQLE.

Belongs to the MYB-CC family. In terms of assembly, homo- and heterodimers. Interacts with PHL3, but not with PHR1.

The protein localises to the nucleus. Its function is as follows. Transcriptional activator. Acts redundantly with PHR1 as a key component of the central regulatory system controlling transcriptional responses to Pi starvation. Binds in a sequence-specific manner to phosphate starvation-regulated promoters. The sequence is that of Protein PHR1-LIKE 2 from Arabidopsis thaliana (Mouse-ear cress).